Here is a 1081-residue protein sequence, read N- to C-terminus: Histone demethylase-like protein A (1081 aa).

The disordered stretch occupies residues 37–173 (QHLQHPSLPN…LSGNTDYARY (137 aa)). The span at 66 to 81 (SPSCNESNESNGETSS) shows a compositional bias: low complexity. Over residues 119 to 132 (DTSNILSGSATSVS) the composition is skewed to polar residues. Positions 141-161 (NSTPPSTVNNVPSSSSITSDS) are enriched in low complexity. The SWIRM domain occupies 192 to 287 (CVTAAYACRL…FGCVEIPPAL (96 aa)). The disordered stretch occupies residues 902 to 940 (ATAQKKKEPPCSNGFSAPVSTSAHPTDASAPARSNNSFS). A compositionally biased stretch (polar residues) spans 914–925 (NGFSAPVSTSAH). The HMG box DNA-binding region spans 969 to 1049 (ARTGLNPFLL…TNTEIWDRWK (81 aa)).

It belongs to the flavin monoamine oxidase family.

It is found in the nucleus. Functionally, H3K4 demethylase-like protein. Might not act as a H3K4 demethylase or is not the major H3K4 demethylase since its deletion does not affect whole genome H3K4 methylation. In Aspergillus fumigatus (strain ATCC MYA-4609 / CBS 101355 / FGSC A1100 / Af293) (Neosartorya fumigata), this protein is Histone demethylase-like protein A.